Consider the following 477-residue polypeptide: Endogenous retrovirus group V member 1 Env polyprotein (477 aa).

The signal sequence occupies residues 1 to 21 (MTEKFLFLYLSLLPMPLLSQA). Residues 22 to 321 (QWNENSLVSF…NTTQPRQKRA (300 aa)) are Extracellular-facing. N-linked (GlcNAc...) asparagine glycosylation occurs at asparagine 68. The helical transmembrane segment at 322–342 (LGLILAGMGAAIGMIAPWGGF) threads the bilayer. The Cytoplasmic portion of the chain corresponds to 343–477 (TYHDVTLRNL…LLSPLWPLSL (135 aa)).

This sequence belongs to the gamma type-C retroviral envelope protein family. In terms of tissue distribution, expressed in placenta.

It is found in the membrane. This is Endogenous retrovirus group V member 1 Env polyprotein (ERVV-1) from Homo sapiens (Human).